The primary structure comprises 149 residues: Calmodulin-like protein 3 (149 aa).

EF-hand domains follow at residues 8–43 (EQIA…LGQN), 44–79 (PTEA…KMKD), 81–116 (DSEE…LGEK), and 117–149 (LSDE…LVSK). Ca(2+)-binding residues include Asp21, Asp23, Asp25, Cys27, Glu32, Asp57, Asp59, Asn61, Thr63, Glu68, Asp94, Asp96, Asn98, Glu105, Asp130, Asp132, Asp134, Gln136, and Glu141.

The protein belongs to the calmodulin family. Interacts with MYO10, the interaction is calcium-dependent and essential for MYO10 function in filopodial extension.

May function as a specific light chain of unconventional myosin-10 (MYO10), also enhances MYO10 translation, possibly by acting as a chaperone for the emerging MYO10 heavy chain protein. May compete with calmodulin by binding, with different affinities, to cellular substrates. The chain is Calmodulin-like protein 3 (Calml3) from Rattus norvegicus (Rat).